Reading from the N-terminus, the 328-residue chain is Phenylalanine--tRNA ligase alpha subunit (328 aa).

Glu245 lines the Mg(2+) pocket.

The protein belongs to the class-II aminoacyl-tRNA synthetase family. Phe-tRNA synthetase alpha subunit type 1 subfamily. In terms of assembly, tetramer of two alpha and two beta subunits. Mg(2+) serves as cofactor.

The protein resides in the cytoplasm. It catalyses the reaction tRNA(Phe) + L-phenylalanine + ATP = L-phenylalanyl-tRNA(Phe) + AMP + diphosphate + H(+). This Helicobacter pylori (strain ATCC 700392 / 26695) (Campylobacter pylori) protein is Phenylalanine--tRNA ligase alpha subunit (pheS).